The following is a 202-amino-acid chain: Prostamide/prostaglandin F synthase (202 aa).

At tyrosine 108 the chain carries Phosphotyrosine.

The protein belongs to the peroxiredoxin-like PRXL2 family. Prostamide/prostaglandin F synthase subfamily.

It is found in the cytoplasm. It localises to the cytosol. It carries out the reaction prostaglandin H2 + [thioredoxin]-dithiol = prostaglandin F2alpha + [thioredoxin]-disulfide. It catalyses the reaction prostamide F2alpha + [thioredoxin]-disulfide = prostamide H2 + [thioredoxin]-dithiol. Catalyzes the reduction of prostaglandin-ethanolamide H(2) (prostamide H(2)) to prostamide F(2alpha) with NADPH as proton donor. Also able to reduce prostaglandin H(2) to prostaglandin F(2alpha). This is Prostamide/prostaglandin F synthase (PRXL2B) from Sus scrofa (Pig).